Reading from the N-terminus, the 178-residue chain is Beta-lactoglobulin-1A/1C (178 aa).

An N-terminal signal peptide occupies residues Met1–Ala18. 2 disulfides stabilise this stretch: Cys84–Cys176 and Cys124–Cys137.

Belongs to the calycin superfamily. Lipocalin family. Under physiological conditions beta-lactoglobulin exists as an equilibrium mixture of monomeric and dimeric forms.

It localises to the secreted. Lactoglobulin is the primary component of whey, it binds retinol and is probably involved in the transport of that molecule. The chain is Beta-lactoglobulin-1A/1C from Sus scrofa (Pig).